Consider the following 385-residue polypeptide: Flap endonuclease 1 (385 aa).

The N-domain stretch occupies residues 1 to 104 (MGILGLSKLI…GELAKRAERR (104 aa)). Asp-34 contacts Mg(2+). Positions 47 and 70 each coordinate DNA. Residues Asp-86, Glu-158, Glu-160, Asp-179, and Asp-181 each contribute to the Mg(2+) site. The tract at residues 122–253 (GIEKFNRRLV…KRAIELINTY (132 aa)) is I-domain. Residue Glu-158 coordinates DNA. Positions 231 and 233 each coordinate DNA. Residue Asp-233 coordinates Mg(2+). The interaction with PCNA stretch occupies residues 336 to 344 (TQVRLDSFF). The interval 346–385 (TLPSTPNATNAAKRKADEAKKSANNKKAKTSGGGRGRRPK) is disordered. Residues 368 to 385 (ANNKKAKTSGGGRGRRPK) show a composition bias toward basic residues.

It belongs to the XPG/RAD2 endonuclease family. FEN1 subfamily. Interacts with PCNA. Three molecules of FEN1 bind to one PCNA trimer with each molecule binding to one PCNA monomer. PCNA stimulates the nuclease activity without altering cleavage specificity. Mg(2+) is required as a cofactor. Phosphorylated. Phosphorylation upon DNA damage induces relocalization to the nuclear plasma.

Its subcellular location is the nucleus. It is found in the nucleolus. The protein resides in the nucleoplasm. The protein localises to the mitochondrion. In terms of biological role, structure-specific nuclease with 5'-flap endonuclease and 5'-3' exonuclease activities involved in DNA replication and repair. During DNA replication, cleaves the 5'-overhanging flap structure that is generated by displacement synthesis when DNA polymerase encounters the 5'-end of a downstream Okazaki fragment. It enters the flap from the 5'-end and then tracks to cleave the flap base, leaving a nick for ligation. Also involved in the long patch base excision repair (LP-BER) pathway, by cleaving within the apurinic/apyrimidinic (AP) site-terminated flap. Acts as a genome stabilization factor that prevents flaps from equilibrating into structures that lead to duplications and deletions. Also possesses 5'-3' exonuclease activity on nicked or gapped double-stranded DNA, and exhibits RNase H activity. Also involved in replication and repair of rDNA and in repairing mitochondrial DNA. This chain is Flap endonuclease 1, found in Drosophila sechellia (Fruit fly).